The chain runs to 369 residues: Anhydro-N-acetylmuramic acid kinase (369 aa).

An ATP-binding site is contributed by 12 to 19 (GTSMDGID).

The protein belongs to the anhydro-N-acetylmuramic acid kinase family.

It carries out the reaction 1,6-anhydro-N-acetyl-beta-muramate + ATP + H2O = N-acetyl-D-muramate 6-phosphate + ADP + H(+). Its pathway is amino-sugar metabolism; 1,6-anhydro-N-acetylmuramate degradation. The protein operates within cell wall biogenesis; peptidoglycan recycling. Catalyzes the specific phosphorylation of 1,6-anhydro-N-acetylmuramic acid (anhMurNAc) with the simultaneous cleavage of the 1,6-anhydro ring, generating MurNAc-6-P. Is required for the utilization of anhMurNAc either imported from the medium or derived from its own cell wall murein, and thus plays a role in cell wall recycling. The protein is Anhydro-N-acetylmuramic acid kinase of Shewanella sediminis (strain HAW-EB3).